We begin with the raw amino-acid sequence, 153 residues long: Ribosome maturation factor RimP (153 aa).

This sequence belongs to the RimP family.

It is found in the cytoplasm. Its function is as follows. Required for maturation of 30S ribosomal subunits. In Solibacter usitatus (strain Ellin6076), this protein is Ribosome maturation factor RimP.